The following is a 66-amino-acid chain: Small vasohibin-binding protein (66 aa).

The segment covering 1–23 (MDPPARKEKTKVKESVSRVEKAK) has biased composition (basic and acidic residues). A disordered region spans residues 1 to 31 (MDPPARKEKTKVKESVSRVEKAKQKSAQQEL). A coiled-coil region spans residues 5–52 (ARKEKTKVKESVSRVEKAKQKSAQQELKQRQRAEIYALNRVMTELEQQ).

It belongs to the SVBP family. As to quaternary structure, interacts with VASH1 and VASH2.

It is found in the cytoplasm. The protein localises to the secreted. It localises to the cytoskeleton. Functionally, enhances the tyrosine carboxypeptidase activity of VASH1 and VASH2, thereby promoting the removal of the C-terminal tyrosine residue of alpha-tubulin. This activity is critical for spindle function and accurate chromosome segregation during mitosis since microtubule detyronisation regulates mitotic spindle length and postioning. Also required to enhance the solubility and secretion of VASH1 and VASH2. Plays a role in axon and excitatory synapse formation. The protein is Small vasohibin-binding protein of Homo sapiens (Human).